A 105-amino-acid chain; its full sequence is uncharacterized protein (105 aa).

This sequence belongs to the baculoviridae 11 kDa protein family.

This is an uncharacterized protein from Autographa californica nuclear polyhedrosis virus (AcMNPV).